Reading from the N-terminus, the 156-residue chain is Arginine repressor (156 aa).

The protein belongs to the ArgR family.

The protein resides in the cytoplasm. It functions in the pathway amino-acid biosynthesis; L-arginine biosynthesis [regulation]. Functionally, regulates arginine biosynthesis genes. This is Arginine repressor from Aeromonas hydrophila subsp. hydrophila (strain ATCC 7966 / DSM 30187 / BCRC 13018 / CCUG 14551 / JCM 1027 / KCTC 2358 / NCIMB 9240 / NCTC 8049).